Consider the following 938-residue polypeptide: Mediator of RNA polymerase II transcription subunit 16 (938 aa).

Belongs to the Mediator complex subunit 16 family. In terms of assembly, component of the Mediator complex.

It localises to the nucleus. Its function is as follows. Component of the Mediator complex, a coactivator involved in the regulated transcription of nearly all RNA polymerase II-dependent genes. Mediator functions as a bridge to convey information from gene-specific regulatory proteins to the basal RNA polymerase II transcription machinery. Mediator is recruited to promoters by direct interactions with regulatory proteins and serves as a scaffold for the assembly of a functional preinitiation complex with RNA polymerase II and the general transcription factors. This Eremothecium gossypii (strain ATCC 10895 / CBS 109.51 / FGSC 9923 / NRRL Y-1056) (Yeast) protein is Mediator of RNA polymerase II transcription subunit 16 (SIN4).